The following is a 99-amino-acid chain: Integration host factor subunit alpha (99 aa).

The disordered stretch occupies residues 51 to 71 (NFDLRDKNQRPGRNPKTGEDI).

It belongs to the bacterial histone-like protein family. In terms of assembly, heterodimer of an alpha and a beta chain.

Its function is as follows. This protein is one of the two subunits of integration host factor, a specific DNA-binding protein that functions in genetic recombination as well as in transcriptional and translational control. The sequence is that of Integration host factor subunit alpha (ihfA) from Dickeya dadantii (strain 3937) (Erwinia chrysanthemi (strain 3937)).